Here is a 282-residue protein sequence, read N- to C-terminus: Ermin (282 aa).

Composition is skewed to polar residues over residues 1-12 (MTDTPVTLSGSE) and 21-30 (NGQQPSSQTR). The tract at residues 1–71 (MTDTPVTLSG…NSKGNVLPRG (71 aa)) is disordered. A phosphoserine mark is found at serine 72, serine 212, serine 224, serine 228, and serine 231. Basic and acidic residues predominate over residues 212–224 (SPLKEESLAREDS). A disordered region spans residues 212-246 (SPLKEESLAREDSPLSSPSSQPGTPDEQLVLGKKG). Residues 225–234 (PLSSPSSQPG) show a composition bias toward polar residues. Residue threonine 235 is modified to Phosphothreonine. The binds actin stretch occupies residues 263 to 282 (KIRKGNTKQRIDEFESMMHL).

As to quaternary structure, binds actin. In terms of tissue distribution, expressed specifically by the oligodendrocytes. Highest expression seen in the spinal cord followed by brainstem, cerebellum, thalamus, and hypothalamus. In the myelin sheath, found mainly in the abaxon and the lateral few terminal loops. Its apposition to the myelinated axon, through the latter, defines an axonal subregion, termed juxtanode, at the Ranvier node-paranode junction.

The protein resides in the cytoplasm. It localises to the cytoskeleton. Functionally, plays a role in cytoskeletal rearrangements during the late wrapping and/or compaction phases of myelinogenesis as well as in maintenance and stability of myelin sheath in the adult. May play an important role in late-stage oligodendroglia maturation, myelin/Ranvier node formation during CNS development, and in the maintenance and plasticity of related structures in the mature CNS. In Rattus norvegicus (Rat), this protein is Ermin (Ermn).